A 320-amino-acid chain; its full sequence is Cytochrome f (320 aa).

The N-terminal stretch at Met1–Ala35 is a signal peptide. Heme-binding residues include Tyr36, Cys56, Cys59, and His60. A helical transmembrane segment spans residues Val286–Lys306.

The protein belongs to the cytochrome f family. The 4 large subunits of the cytochrome b6-f complex are cytochrome b6, subunit IV (17 kDa polypeptide, petD), cytochrome f and the Rieske protein, while the 4 small subunits are PetG, PetL, PetM and PetN. The complex functions as a dimer. Requires heme as cofactor.

It localises to the plastid. Its subcellular location is the chloroplast thylakoid membrane. Component of the cytochrome b6-f complex, which mediates electron transfer between photosystem II (PSII) and photosystem I (PSI), cyclic electron flow around PSI, and state transitions. The protein is Cytochrome f of Acorus calamus (Sweet flag).